We begin with the raw amino-acid sequence, 147 residues long: Monothiol glutaredoxin-S5 (147 aa).

In terms of domain architecture, Glutaredoxin spans 49 to 146; it reads AAEVRRAVAE…PILKKAGALW (98 aa). Residue Cys69 coordinates [2Fe-2S] cluster. The Responsive for interaction with TGA factors motif lies at 144–147; it reads ALWL.

This sequence belongs to the glutaredoxin family. CC-type subfamily.

The protein resides in the cytoplasm. Its subcellular location is the nucleus. Functionally, may only reduce GSH-thiol disulfides, but not protein disulfides. The polypeptide is Monothiol glutaredoxin-S5 (GRXS5) (Oryza sativa subsp. japonica (Rice)).